Here is a 404-residue protein sequence, read N- to C-terminus: D-galactonate dehydratase family member PC1_0802 (404 aa).

Positions 37 and 122 each coordinate substrate. Residue Y159 is the Proton donor/acceptor of the active site. Position 212 (D212) interacts with Mg(2+). H214 functions as the Proton donor/acceptor in the catalytic mechanism. Residues E238 and E264 each contribute to the Mg(2+) site. Substrate-binding residues include E264, R285, H314, D318, and E341.

This sequence belongs to the mandelate racemase/muconate lactonizing enzyme family. GalD subfamily. It depends on Mg(2+) as a cofactor.

The catalysed reaction is D-mannonate = 2-dehydro-3-deoxy-D-gluconate + H2O. Has low D-mannonate dehydratase activity (in vitro), suggesting that this is not a physiological substrate and that it has no significant role in D-mannonate degradation in vivo. Has no detectable activity with a panel of 70 other acid sugars (in vitro). This chain is D-galactonate dehydratase family member PC1_0802, found in Pectobacterium carotovorum subsp. carotovorum (strain PC1).